Consider the following 282-residue polypeptide: Putative 4-diphosphocytidyl-2-C-methyl-D-erythritol kinase (282 aa).

Lysine 9 is an active-site residue. Residue 93–103 participates in ATP binding; the sequence is PVSAGLAGGSA. Aspartate 135 is a catalytic residue.

This sequence belongs to the GHMP kinase family. IspE subfamily.

The catalysed reaction is 4-CDP-2-C-methyl-D-erythritol + ATP = 4-CDP-2-C-methyl-D-erythritol 2-phosphate + ADP + H(+). Catalyzes the phosphorylation of the position 2 hydroxy group of 4-diphosphocytidyl-2C-methyl-D-erythritol. The polypeptide is Putative 4-diphosphocytidyl-2-C-methyl-D-erythritol kinase (Staphylococcus aureus (strain MSSA476)).